A 300-amino-acid polypeptide reads, in one-letter code: Cholesterol 25-hydroxylase-like protein (300 aa).

Asparagine 9 carries N-linked (GlcNAc...) asparagine glycosylation. Transmembrane regions (helical) follow at residues 54–73 (YTWV…VPFF), 95–115 (LQGW…LIWV), and 130–152 (MLSQ…HYIN). Residues 135–266 (AIFFLAFDFT…WFNYLDRLMG (132 aa)) enclose the Fatty acid hydroxylase domain. The short motif at 148 to 152 (FHYIN) is the Histidine box-1 element. Positions 163-167 (HSVHH) match the Histidine box-2 motif. A helical membrane pass occupies residues 192–212 (ITTIPWIFPTHCLTYWIWFFI). The Histidine box-3 motif lies at 242–248 (AHDMHHL).

This sequence belongs to the sterol desaturase family. The cofactor is Fe cation.

The protein localises to the membrane. Its function is as follows. Probable sterol desaturase. This chain is Cholesterol 25-hydroxylase-like protein, found in Caenorhabditis elegans.